A 5206-amino-acid chain; its full sequence is Multifunctional-autoprocessing repeats-in-toxin (5206 aa).

A signal peptide spans 1-19 (MGKPFWRSVEYFFTGNYSA). RtxA repeat units lie at residues 101–118 (GAAG…GDVS), 121–138 (GAAA…GNVT), 141–157 (GAGG…QGNL), 161–184 (GAGA…GDVT), 187–204 (GAGA…GNIT), 207–224 (GAGA…GDIT), 255–272 (GVGG…GDIH), 275–291 (GGGA…GSSF), 584–601 (GAGG…GNVY), 604–620 (GGGI…FGNT), 624–641 (GGGA…GDLT), 644–658 (GAGL…SKQG), 741–753 (AGGA…VGDG), 759–771 (MLGG…HISG), 782–798 (ALGG…GNTL), 801–816 (MGGG…DGTT), 820–835 (MVGG…NGDT), 841–855 (GVGN…GQTL), 858–875 (MGAA…TSIA), 877–891 (MIGA…GEGN), 896–910 (MGGL…GNGD), 915–932 (MVAE…MSVA), 934–950 (MLAK…GTTL), 972–984 (MIGQ…KVGN), 991–1006 (MVGK…DGTS), 1031–1043 (GKAN…GDGL), 1067–1079 (AAAK…HVGD), 1087–1102 (AGKG…GTTV), 1110–1122 (GNVM…GTTI), 1125–1142 (AKGK…LGVN), 1145–1159 (WGQA…DGDR), 1163–1179 (AKGE…GKEV), 1184–1199 (GKAN…DDYT), 1201–1217 (AWGK…GRNV), 1220–1236 (AKGE…GDSF), 1242–1256 (KGNI…MQVT), 1258–1275 (AKGK…LSVT), 1296–1313 (AWGK…LNVA), and 1315–1332 (MKGK…LNIN). The segment covering 1606-1626 (SQQANAVSEHATQNQASQNAL) has biased composition (polar residues). 2 disordered regions span residues 1606–1682 (SQQA…ESEA) and 1738–1895 (IAAA…EQEA). Over residues 1627–1646 (SDKERAEADRQRLEQEKQKQ) the composition is skewed to basic and acidic residues. Residues 1652 to 1671 (GSQSQLESTDQQALGNNGQA) show a composition bias toward polar residues. The span at 1778–1805 (AEAKADAETRKADAVAKSNDAKQAESDA) shows a compositional bias: basic and acidic residues. Polar residues predominate over residues 1825-1834 (NKANQAQNDA). Residues 1835–1849 (KGTKQNEGDRPDREG) are compositionally biased toward basic and acidic residues. Positions 1870 to 1880 (SHITTDSQTNA) are enriched in polar residues. A membrane localization region (MLD) region spans residues 2377-2461 (ELMSVTELLD…SLLNQVNSRL (85 aa)). The tract at residues 2537 to 2901 (EYGQVVADTI…HQVTDVLDAL (365 aa)) is rho inactivation domain (RID). The interval 2998-3113 (VVLFLHGSGS…MPSMTKAITA (116 aa)) is ABH effector region. The Peptidase C80 domain occupies 4111 to 4295 (PTADGGESRF…AENNKVSLSW (185 aa)). Residues 4117-4119 (ESR), 4144-4145 (KH), and arginine 4175 contribute to the 1D-myo-inositol hexakisphosphate site. Residue histidine 4181 is the For cysteine protease activity of the active site. Serine 4226 contacts 1D-myo-inositol hexakisphosphate. Residue cysteine 4230 is the Nucleophile; for cysteine protease activity of the active site. 1D-myo-inositol hexakisphosphate is bound by residues 4259–4261 (SVR), 4272–4273 (RK), lysine 4285, and lysine 4290. Disordered stretches follow at residues 4333 to 4362 (GAIG…ANNK) and 4738 to 4779 (LKEK…ETPD). The span at 4750–4762 (SSVSVNGASVNSA) shows a compositional bias: low complexity.

It depends on Mg(2+) as a cofactor.

The protein resides in the secreted. Its subcellular location is the host cytoplasm. It is found in the host cytosol. The protein localises to the host cell membrane. It carries out the reaction L-lysyl-/S-(2E,6E,10E)-geranylgeranyl-L-cysteinyl-[protein] + hexadecanoyl-CoA = N(6)-hexadecanoyl-L-lysyl-/S-(2E,6E,10E)-geranylgeranyl-L-cysteinyl-[protein] + CoA + H(+). The enzyme catalyses L-lysyl-/S-(2E,6E,10E)-geranylgeranyl-L-cysteinyl-[protein] + dodecanoyl-CoA = N(6)-dodecanoyl-L-lysyl-/S-(2E,6E,10E)-geranylgeranyl-L-cysteinyl-[protein] + CoA + H(+). The catalysed reaction is L-lysyl-/S-(2E,6E,10E)-geranylgeranyl-L-cysteinyl-[protein] + decanoyl-CoA = N(6)-decanoyl-L-lysyl-/S-(2E,6E,10E)-geranylgeranyl-L-cysteinyl-[protein] + CoA + H(+). Functionally, precursor of a multifunctional toxin that causes destruction of the actin cytoskeleton by covalent cross-linking of actin and inactivation of Rho GTPases when translocated into the host cytoplasm. Upon translocation into the host cell, undergoes autoprocessing in cis mediated by the peptidase C80 domain (also named CPD domain): the protease activity is activated upon binding inositol hexakisphosphate (InsP6) present at the host cell membrane and delivers the Cysteine protease domain-containing toxin F3 chain to the host cytosol. The Cysteine protease domain-containing toxin F3 chain will then further cleave and release effector toxin chains that cause disassembly of the actin cytoskeleton and enhance V.vulnificus colonization of the small intestine, possibly by facilitating evasion of phagocytic cells. Its function is as follows. Following autocatalytic cleavage in cis, this chain mediates processing in trans to release other individual toxin chains to the host cytosol. Released effector toxin chains cause disassembly of the actin cytoskeleton and enhance V.vulnificus colonization of the small intestine, possibly by facilitating evasion of phagocytic cells. In terms of biological role, actin-directed toxin that catalyzes the covalent cross-linking of host cytoplasmic monomeric actin. Mediates the cross-link between 'Lys-50' of one monomer and 'Glu-270' of another actin monomer, resulting in formation of highly toxic actin oligomers that cause cell rounding. The toxin can be highly efficient at very low concentrations by acting on formin homology family proteins: toxic actin oligomers bind with high affinity to formins and adversely affect both nucleation and elongation abilities of formins, causing their potent inhibition in both profilin-dependent and independent manners. Acts as an acid--amino-acid ligase that transfers the gamma-phosphoryl group of ATP to the 'Glu-270' actin residue, resulting in the formation of an activated acyl phosphate intermediate. This intermediate is further hydrolyzed and the energy of hydrolysis is utilized for the formation of the amide bond between actin subunits. N-epsilon-fatty acyltransferase that mediates lysine-palmitoylation of host Rho GTPase proteins, with a strong preference for host Rac1. After delivery to the host cytosol, localizes to the host cell membrane where it palmitoylates host Rho GTPase proteins, resulting in loss of all active GTP-bound Rho and subsequent actin depolymerization. Prenylation of host Rac1 at the C-terminus is required for lysine-palmitoylation. Functionally, indirectly activates the small GTPase CDC42. The protein is Multifunctional-autoprocessing repeats-in-toxin of Vibrio vulnificus.